Consider the following 333-residue polypeptide: tRNA N6-adenosine threonylcarbamoyltransferase (333 aa).

Fe cation contacts are provided by His111 and His115. Residues 134 to 138 (LASGG), Asp167, Gly180, and Asn273 contribute to the substrate site. A Fe cation-binding site is contributed by Asp301.

The protein belongs to the KAE1 / TsaD family. Fe(2+) is required as a cofactor.

Its subcellular location is the cytoplasm. The catalysed reaction is L-threonylcarbamoyladenylate + adenosine(37) in tRNA = N(6)-L-threonylcarbamoyladenosine(37) in tRNA + AMP + H(+). In terms of biological role, required for the formation of a threonylcarbamoyl group on adenosine at position 37 (t(6)A37) in tRNAs that read codons beginning with adenine. Is involved in the transfer of the threonylcarbamoyl moiety of threonylcarbamoyl-AMP (TC-AMP) to the N6 group of A37, together with TsaE and TsaB. TsaD likely plays a direct catalytic role in this reaction. The polypeptide is tRNA N6-adenosine threonylcarbamoyltransferase (Desulforapulum autotrophicum (strain ATCC 43914 / DSM 3382 / VKM B-1955 / HRM2) (Desulfobacterium autotrophicum)).